A 527-amino-acid polypeptide reads, in one-letter code: UDP-glucuronosyltransferase 2A1 (527 aa).

An N-terminal signal peptide occupies residues 1 to 20 (MLNNLLLFSLQISLIGTTLG). The Lumenal portion of the chain corresponds to 21–491 (GNVLIWPMEG…TWFQYHSLDV (471 aa)). Residues N49, L313, and N347 are each glycosylated (N-linked (GlcNAc...) asparagine). A helical membrane pass occupies residues 492–512 (IGFLLVCVTTAIFLVIQCCLF). At 513 to 527 (SCQKFGKIGKKKKRE) the chain is on the cytoplasmic side.

This sequence belongs to the UDP-glycosyltransferase family. Olfactory epithelium, brain and fetal lung. Not present in liver.

It localises to the membrane. Its subcellular location is the endoplasmic reticulum membrane. The catalysed reaction is glucuronate acceptor + UDP-alpha-D-glucuronate = acceptor beta-D-glucuronoside + UDP + H(+). The enzyme catalyses 16beta,17beta-estriol + UDP-alpha-D-glucuronate = 16beta,17beta-estriol 16-O-(beta-D-glucuronate) + UDP + H(+). It carries out the reaction 16alpha,17alpha-estriol + UDP-alpha-D-glucuronate = 16alpha,17alpha-estriol 16-O-(beta-D-glucuronate) + UDP + H(+). It catalyses the reaction 17alpha-estradiol + UDP-alpha-D-glucuronate = 17alpha-estradiol 17-O-(beta-D-glucuronate) + UDP + H(+). The catalysed reaction is 17alpha-estradiol + UDP-alpha-D-glucuronate = 17alpha-estradiol 3-O-(beta-D-glucuronate) + UDP + H(+). The enzyme catalyses 17beta-estradiol + UDP-alpha-D-glucuronate = 17beta-estradiol 3-O-(beta-D-glucuronate) + UDP + H(+). It carries out the reaction 17beta-estradiol + UDP-alpha-D-glucuronate = 17beta-estradiol 17-O-(beta-D-glucuronate) + UDP + H(+). It catalyses the reaction testosterone + UDP-alpha-D-glucuronate = testosterone 17-O-(beta-D-glucuronate) + UDP + H(+). The catalysed reaction is epitestosterone + UDP-alpha-D-glucuronate = epitestosterone 17-O-(beta-D-glucuronate) + UDP + H(+). The enzyme catalyses lithocholate + UDP-alpha-D-glucuronate = lithocholoyl-3-O-(beta-D-glucuronate) + UDP + H(+). It carries out the reaction lithocholate + UDP-alpha-D-glucuronate = lithocholoyl-24-O-(beta-D-glucuronate) + UDP. It catalyses the reaction deoxycholate + UDP-alpha-D-glucuronate = deoxycholoyl-24-O-(beta-D-glucuronate) + UDP. The catalysed reaction is hyodeoxycholate + UDP-alpha-D-glucuronate = hyodeoxycholoyl-24-O-(beta-D-glucuronate) + UDP. The enzyme catalyses hyocholate + UDP-alpha-D-glucuronate = hyocholoyl-24-O-(beta-D-glucuronate) + UDP. UDP-glucuronosyltransferase (UGT) that catalyzes phase II biotransformation reactions in which lipophilic substrates are conjugated with glucuronic acid to increase the metabolite's water solubility, thereby facilitating excretion into either the urine or bile. Essential for the elimination and detoxification of drugs, xenobiotics and endogenous compounds. Catalyzes the glucuronidation of endogenous steroid hormones such as androgens (testosterone and epitestosterone) and estrogens (estradiol and epiestriol). Contributes to bile acid (BA) detoxification by catalyzing the glucuronidation of BA substrates, which are natural detergents for dietary lipids absorption. Shows a high affinity to aliphatic odorants such as citronellol as well as olfactory tissue specificity, and therefore may be involved in olfaction. Shows a potential role in detoxification of toxic waste compounds in the amniotic fluid before birth, and air-born chemical after birth. The sequence is that of UDP-glucuronosyltransferase 2A1 from Homo sapiens (Human).